Here is a 725-residue protein sequence, read N- to C-terminus: Exocyst complex component 8 (725 aa).

The residue at position 19 (Ser-19) is a Phosphoserine. A disordered region spans residues 116-159 (AASGGEEGGGGAGGRDQLRGQTGFFPSPGGASRDGSGPGEEGKQ). Gly residues predominate over residues 120 to 129 (GEEGGGGAGG). A PH domain is found at 182–282 (YLVYNGDLVE…WLEVLEETKR (101 aa)). Residues 285-322 (SEKRRREQEEAAAPRGPPQVTPKASNPFEDEDDDEPTV) form a disordered region. Residues 312-322 (FEDEDDDEPTV) are compositionally biased toward acidic residues.

The protein belongs to the EXO84 family. As to quaternary structure, the exocyst complex is composed of EXOC1, EXOC2, EXOC3, EXOC4, EXOC5, EXOC6, EXOC7 and EXOC8. Interacts (via PH domain) with GTP-bound RALA and RALB. Interacts with SH3BP1; required for the localization of both SH3BP1 and the exocyst to the leading edge of migrating cells.

The protein resides in the cytoplasm. The protein localises to the perinuclear region. It is found in the cell projection. It localises to the growth cone. Functionally, component of the exocyst complex involved in the docking of exocytic vesicles with fusion sites on the plasma membrane. This chain is Exocyst complex component 8 (EXOC8), found in Bos taurus (Bovine).